The primary structure comprises 170 residues: Adenine phosphoribosyltransferase (170 aa).

The protein belongs to the purine/pyrimidine phosphoribosyltransferase family. Homodimer.

The protein resides in the cytoplasm. The catalysed reaction is AMP + diphosphate = 5-phospho-alpha-D-ribose 1-diphosphate + adenine. It participates in purine metabolism; AMP biosynthesis via salvage pathway; AMP from adenine: step 1/1. In terms of biological role, catalyzes a salvage reaction resulting in the formation of AMP, that is energically less costly than de novo synthesis. The protein is Adenine phosphoribosyltransferase of Bacillus licheniformis (strain ATCC 14580 / DSM 13 / JCM 2505 / CCUG 7422 / NBRC 12200 / NCIMB 9375 / NCTC 10341 / NRRL NRS-1264 / Gibson 46).